Consider the following 353-residue polypeptide: Quinolinate synthase (353 aa).

Positions 47 and 68 each coordinate iminosuccinate. Residue C113 coordinates [4Fe-4S] cluster. Residues 139–141 (YAN) and S156 contribute to the iminosuccinate site. Residue C200 coordinates [4Fe-4S] cluster. Iminosuccinate is bound by residues 226-228 (HPE) and T243. A [4Fe-4S] cluster-binding site is contributed by C297.

This sequence belongs to the quinolinate synthase family. Type 1 subfamily. It depends on [4Fe-4S] cluster as a cofactor.

The protein localises to the cytoplasm. It carries out the reaction iminosuccinate + dihydroxyacetone phosphate = quinolinate + phosphate + 2 H2O + H(+). It functions in the pathway cofactor biosynthesis; NAD(+) biosynthesis; quinolinate from iminoaspartate: step 1/1. Its function is as follows. Catalyzes the condensation of iminoaspartate with dihydroxyacetone phosphate to form quinolinate. In Vibrio parahaemolyticus serotype O3:K6 (strain RIMD 2210633), this protein is Quinolinate synthase.